Reading from the N-terminus, the 458-residue chain is Argininosuccinate lyase (458 aa).

It belongs to the lyase 1 family. Argininosuccinate lyase subfamily.

It is found in the cytoplasm. It carries out the reaction 2-(N(omega)-L-arginino)succinate = fumarate + L-arginine. The protein operates within amino-acid biosynthesis; L-arginine biosynthesis; L-arginine from L-ornithine and carbamoyl phosphate: step 3/3. This is Argininosuccinate lyase from Heliobacterium mobile (Heliobacillus mobilis).